The primary structure comprises 500 residues: Abscisic acid 8'-hydroxylase 3 (500 aa).

Residues 3–23 (ASFVIVIVISFFISLAFMCYV) form a helical membrane-spanning segment. Cysteine 426 contributes to the heme binding site.

It belongs to the cytochrome P450 family. It depends on heme as a cofactor.

The protein localises to the membrane. The catalysed reaction is 2-cis-(+)-abscisate + reduced [NADPH--hemoprotein reductase] + O2 = (+)-8'-hydroxyabscisate + oxidized [NADPH--hemoprotein reductase] + H2O + H(+). Its pathway is plant hormone degradation; abscisic acid degradation. In terms of biological role, involved in the oxidative degradation of abscisic acid. The protein is Abscisic acid 8'-hydroxylase 3 (CYP707A7) of Oryza sativa subsp. japonica (Rice).